Here is a 247-residue protein sequence, read N- to C-terminus: Dihydroorotate dehydrogenase B (NAD(+)), electron transfer subunit (247 aa).

The 95-residue stretch at 2 to 96 (RWKMKARVLS…TGPHGNGFEI (95 aa)) folds into the FAD-binding FR-type domain. Residues 49–52 (RPFS), 64–66 (LYQ), and 71–72 (GT) each bind FAD. [2Fe-2S] cluster contacts are provided by C210, C215, C218, and C234.

The protein belongs to the PyrK family. Heterotetramer of 2 PyrK and 2 PyrD type B subunits. [2Fe-2S] cluster serves as cofactor. It depends on FAD as a cofactor.

Its pathway is pyrimidine metabolism; UMP biosynthesis via de novo pathway; orotate from (S)-dihydroorotate (NAD(+) route): step 1/1. Its function is as follows. Responsible for channeling the electrons from the oxidation of dihydroorotate from the FMN redox center in the PyrD type B subunit to the ultimate electron acceptor NAD(+). In Caldanaerobacter subterraneus subsp. tengcongensis (strain DSM 15242 / JCM 11007 / NBRC 100824 / MB4) (Thermoanaerobacter tengcongensis), this protein is Dihydroorotate dehydrogenase B (NAD(+)), electron transfer subunit.